Here is a 485-residue protein sequence, read N- to C-terminus: UDP-N-acetylmuramoyl-L-alanyl-D-glutamate--2,6-diaminopimelate ligase (485 aa).

Serine 28 contacts UDP-N-acetyl-alpha-D-muramoyl-L-alanyl-D-glutamate. Position 108 to 114 (108 to 114) interacts with ATP; that stretch reads GTNGKTS. UDP-N-acetyl-alpha-D-muramoyl-L-alanyl-D-glutamate-binding positions include asparagine 147, 148–149, serine 175, and arginine 183; that span reads TT. An N6-carboxylysine modification is found at lysine 215. Meso-2,6-diaminopimelate contacts are provided by residues arginine 374, 398–401, glycine 449, and glutamate 453; that span reads DNPR. The Meso-diaminopimelate recognition motif motif lies at 398 to 401; it reads DNPR.

It belongs to the MurCDEF family. MurE subfamily. It depends on Mg(2+) as a cofactor. In terms of processing, carboxylation is probably crucial for Mg(2+) binding and, consequently, for the gamma-phosphate positioning of ATP.

It is found in the cytoplasm. It catalyses the reaction UDP-N-acetyl-alpha-D-muramoyl-L-alanyl-D-glutamate + meso-2,6-diaminopimelate + ATP = UDP-N-acetyl-alpha-D-muramoyl-L-alanyl-gamma-D-glutamyl-meso-2,6-diaminopimelate + ADP + phosphate + H(+). It participates in cell wall biogenesis; peptidoglycan biosynthesis. Functionally, catalyzes the addition of meso-diaminopimelic acid to the nucleotide precursor UDP-N-acetylmuramoyl-L-alanyl-D-glutamate (UMAG) in the biosynthesis of bacterial cell-wall peptidoglycan. In Fusobacterium nucleatum subsp. nucleatum (strain ATCC 25586 / DSM 15643 / BCRC 10681 / CIP 101130 / JCM 8532 / KCTC 2640 / LMG 13131 / VPI 4355), this protein is UDP-N-acetylmuramoyl-L-alanyl-D-glutamate--2,6-diaminopimelate ligase.